The primary structure comprises 339 residues: Ketol-acid reductoisomerase (NADP(+)) (339 aa).

The region spanning 1-182 (MRVYYDRDAD…GGGRAGIIET (182 aa)) is the KARI N-terminal Rossmann domain. NADP(+) contacts are provided by residues 24–27 (YGSQ), arginine 48, serine 51, serine 53, and 83–86 (DELQ). Residue histidine 108 is part of the active site. Glycine 134 serves as a coordination point for NADP(+). Residues 183 to 328 (TFREECETDL…ARLRDMMPWI (146 aa)) enclose the KARI C-terminal knotted domain. Positions 191, 195, 227, and 231 each coordinate Mg(2+). Serine 252 is a binding site for substrate.

It belongs to the ketol-acid reductoisomerase family. Mg(2+) serves as cofactor.

It catalyses the reaction (2R)-2,3-dihydroxy-3-methylbutanoate + NADP(+) = (2S)-2-acetolactate + NADPH + H(+). The enzyme catalyses (2R,3R)-2,3-dihydroxy-3-methylpentanoate + NADP(+) = (S)-2-ethyl-2-hydroxy-3-oxobutanoate + NADPH + H(+). The protein operates within amino-acid biosynthesis; L-isoleucine biosynthesis; L-isoleucine from 2-oxobutanoate: step 2/4. Its pathway is amino-acid biosynthesis; L-valine biosynthesis; L-valine from pyruvate: step 2/4. Involved in the biosynthesis of branched-chain amino acids (BCAA). Catalyzes an alkyl-migration followed by a ketol-acid reduction of (S)-2-acetolactate (S2AL) to yield (R)-2,3-dihydroxy-isovalerate. In the isomerase reaction, S2AL is rearranged via a Mg-dependent methyl migration to produce 3-hydroxy-3-methyl-2-ketobutyrate (HMKB). In the reductase reaction, this 2-ketoacid undergoes a metal-dependent reduction by NADPH to yield (R)-2,3-dihydroxy-isovalerate. The protein is Ketol-acid reductoisomerase (NADP(+)) of Nitrobacter winogradskyi (strain ATCC 25391 / DSM 10237 / CIP 104748 / NCIMB 11846 / Nb-255).